We begin with the raw amino-acid sequence, 155 residues long: Large ribosomal subunit protein uL22 (155 aa).

The protein belongs to the universal ribosomal protein uL22 family. Part of the 50S ribosomal subunit.

In terms of biological role, this protein binds specifically to 23S rRNA. It makes multiple contacts with different domains of the 23S rRNA in the assembled 50S subunit and ribosome. Its function is as follows. The globular domain of the protein is located near the polypeptide exit tunnel on the outside of the subunit, while an extended beta-hairpin is found that lines the wall of the exit tunnel in the center of the 70S ribosome. This chain is Large ribosomal subunit protein uL22, found in Pyrococcus horikoshii (strain ATCC 700860 / DSM 12428 / JCM 9974 / NBRC 100139 / OT-3).